An 87-amino-acid polypeptide reads, in one-letter code: U14-lycotoxin-Ls1c (87 aa).

A signal peptide spans 1–20 (MNSKVFAVLLLLALLTCILS). In terms of domain architecture, WAP spans 21 to 66 (EKYCPTPRNTSCKKMNIKNNCCRDSDCTSNAFCCAEPCGNFCHKAS). 5 disulfide bridges follow: Cys-24–Cys-54, Cys-32–Cys-58, Cys-41–Cys-53, Cys-42–Cys-80, and Cys-47–Cys-62.

It belongs to the venom protein 11 family. 01 (wap-1) subfamily. Contains 5 disulfide bonds. In terms of tissue distribution, expressed by the venom gland.

The protein localises to the secreted. Has antibacterial activity. The chain is U14-lycotoxin-Ls1c from Lycosa singoriensis (Wolf spider).